We begin with the raw amino-acid sequence, 448 residues long: Glutamyl-tRNA reductase (448 aa).

Substrate contacts are provided by residues 49–52, S109, 114–116, and Q120; these read TCNR and ETQ. C50 functions as the Nucleophile in the catalytic mechanism. 189–194 provides a ligand contact to NADP(+); that stretch reads GAGEMS.

It belongs to the glutamyl-tRNA reductase family. Homodimer.

It carries out the reaction (S)-4-amino-5-oxopentanoate + tRNA(Glu) + NADP(+) = L-glutamyl-tRNA(Glu) + NADPH + H(+). The protein operates within porphyrin-containing compound metabolism; protoporphyrin-IX biosynthesis; 5-aminolevulinate from L-glutamyl-tRNA(Glu): step 1/2. Catalyzes the NADPH-dependent reduction of glutamyl-tRNA(Glu) to glutamate 1-semialdehyde (GSA). This is Glutamyl-tRNA reductase from Staphylococcus aureus (strain Mu3 / ATCC 700698).